The primary structure comprises 570 residues: Dihydroxy-acid dehydratase 2 (570 aa).

C51 serves as a coordination point for [2Fe-2S] cluster. Residue D83 participates in Mg(2+) binding. C124 serves as a coordination point for [2Fe-2S] cluster. Residues D125 and K126 each coordinate Mg(2+). An N6-carboxylysine modification is found at K126. C196 is a [2Fe-2S] cluster binding site. A Mg(2+)-binding site is contributed by E446. Catalysis depends on S472, which acts as the Proton acceptor.

The protein belongs to the IlvD/Edd family. Homodimer. [2Fe-2S] cluster serves as cofactor. The cofactor is Mg(2+).

The catalysed reaction is (2R)-2,3-dihydroxy-3-methylbutanoate = 3-methyl-2-oxobutanoate + H2O. It carries out the reaction (2R,3R)-2,3-dihydroxy-3-methylpentanoate = (S)-3-methyl-2-oxopentanoate + H2O. The protein operates within amino-acid biosynthesis; L-isoleucine biosynthesis; L-isoleucine from 2-oxobutanoate: step 3/4. It participates in amino-acid biosynthesis; L-valine biosynthesis; L-valine from pyruvate: step 3/4. Functions in the biosynthesis of branched-chain amino acids. Catalyzes the dehydration of (2R,3R)-2,3-dihydroxy-3-methylpentanoate (2,3-dihydroxy-3-methylvalerate) into 2-oxo-3-methylpentanoate (2-oxo-3-methylvalerate) and of (2R)-2,3-dihydroxy-3-methylbutanoate (2,3-dihydroxyisovalerate) into 2-oxo-3-methylbutanoate (2-oxoisovalerate), the penultimate precursor to L-isoleucine and L-valine, respectively. In Bordetella bronchiseptica (strain ATCC BAA-588 / NCTC 13252 / RB50) (Alcaligenes bronchisepticus), this protein is Dihydroxy-acid dehydratase 2.